The sequence spans 270 residues: Chromo domain-containing protein cec-4 (270 aa).

2 disordered regions span residues 1–24 and 143–229; these read MAKK…ETSK and KIAQ…KNDV. The Chromo domain maps to 87-147; that stretch reads YAVERVLAHR…HQEDLKIAQT (61 aa). Composition is skewed to basic residues over residues 151 to 167 and 187 to 197; these read TPSK…KRRA and TPKQSTKKLKR. The segment covering 205–229 has biased composition (basic and acidic residues); sequence LVEKSKKKAIPDLENHTLDQEKNDV.

As to quaternary structure, interacts with mono-, di- and tri-methylated 'Lys-9' residues on histone H3. Weakly interacts with methylated 'Lys-37' residues on histone H3.

It is found in the nucleus inner membrane. It localises to the membrane. Chromatin anchor protein which binds to methylated lysine residues on histone H3, thereby recruiting heterochromatin to the nuclear periphery, especially in embryonic cells, with a lesser role in differentiated cells. May be required for the correct positioning of chromatin and nucleoli in embryos. The polypeptide is Chromo domain-containing protein cec-4 (Caenorhabditis elegans).